A 440-amino-acid polypeptide reads, in one-letter code: MQAYFDQLDRVRYEGSKSSNPLAFRHYNPDELVLGKRMEEHLRFAACYWHTFCWNGADMFGVGAFNRPWQQPGEALALAKRKADVAFEFFHKLHVPFYCFHDVDVSPEGASLKEYINNFAQMVDVLAGKQEESGVKLLWGTANCFTNPRYGAGAATNPDPEVFSWAATQVVTAMEATHKLGGENYVLWGGREGYETLLNTDLRQEREQLGRFMQMVVEHKHKIGFQGTLLIEPKPQEPTKHQYDYDAATVYGFLKQFGLEKEIKLNIEANHATLAGHSFHHEIATAIALGLFGSVDANRGDAQLGWDTDQFPNSVEENALVMYEILKAGGFTTGGLNFDAKVRRQSTDKYDLFYGHIGAMDTMALALKIAARMIEDGELDKRIAQRYSGWNSELGQQILKGQMSLADLAKYAQEHNLSPVHQSGRQEQLENLVNHYLFDK.

Catalysis depends on residues His101 and Asp104. 7 residues coordinate Mg(2+): Glu232, Glu268, His271, Asp296, Asp307, Asp309, and Asp339.

The protein belongs to the xylose isomerase family. Homotetramer. Requires Mg(2+) as cofactor.

The protein localises to the cytoplasm. The enzyme catalyses alpha-D-xylose = alpha-D-xylulofuranose. In Escherichia coli (strain SMS-3-5 / SECEC), this protein is Xylose isomerase.